Consider the following 581-residue polypeptide: Polypeptide N-acetylgalactosaminyltransferase 12 (581 aa).

Residues 1 to 19 lie on the Cytoplasmic side of the membrane; sequence MWGRTARRRCPRELRRGRE. Residues 20-37 traverse the membrane as a helical; Signal-anchor for type II membrane protein segment; sequence ALLVLLALLALAGLGSVL. The Lumenal segment spans residues 38–581; the sequence is RAQRGAGAGA…QKWFFKERML (544 aa). A disordered region spans residues 43–67; it reads AGAGAAEPGPPRTPRPGRREPVMPR. 5 disulfides stabilise this stretch: C125-C358, C349-C422, C458-C479, C506-C521, and C547-C566. A catalytic subdomain A region spans residues 135–244; that stretch reads LPRTSVIIAF…EGWLEPLLQR (110 aa). Substrate is bound by residues D176 and R205. Mn(2+) contacts are provided by D228 and H230. The segment at 304 to 366 is catalytic subdomain B; the sequence is VIRSPTMAGG…PCSHVGHVFP (63 aa). W335 is a binding site for substrate. H363 provides a ligand contact to Mn(2+). Y371 lines the substrate pocket. In terms of domain architecture, Ricin B-type lectin spans 445 to 577; sequence FFGMLQNKGL…NSDHQKWFFK (133 aa).

The protein belongs to the glycosyltransferase 2 family. GalNAc-T subfamily. Mn(2+) serves as cofactor. Widely expressed at different levels of expression. Highly expressed in digestive organs such as small intestine, stomach, pancreas and colon. Expressed at intermediate level in testis, thyroid gland and spleen. Weakly expressed in whole brain, cerebral cortex, cerebellum, fetal brain, bone marrow, thymus, leukocytes, heart, skeletal muscle, liver, lung, esophagus, kidney, adrenal gland, mammary gland, uterus, placenta, ovary and prostate.

The protein localises to the golgi apparatus membrane. The catalysed reaction is L-seryl-[protein] + UDP-N-acetyl-alpha-D-galactosamine = a 3-O-[N-acetyl-alpha-D-galactosaminyl]-L-seryl-[protein] + UDP + H(+). It catalyses the reaction L-threonyl-[protein] + UDP-N-acetyl-alpha-D-galactosamine = a 3-O-[N-acetyl-alpha-D-galactosaminyl]-L-threonyl-[protein] + UDP + H(+). Its pathway is protein modification; protein glycosylation. In terms of biological role, catalyzes the initial reaction in O-linked oligosaccharide biosynthesis, the transfer of an N-acetyl-D-galactosamine residue to a serine or threonine residue on the protein receptor. Has activity toward non-glycosylated peptides such as Muc5AC, Muc1a and EA2, and no detectable activity with Muc2 and Muc7. Displays enzymatic activity toward the Gal-NAc-Muc5AC glycopeptide, but no detectable activity to mono-GalNAc-glycosylated Muc1a, Muc2, Muc7 and EA2. May play an important role in the initial step of mucin-type oligosaccharide biosynthesis in digestive organs. This chain is Polypeptide N-acetylgalactosaminyltransferase 12 (GALNT12), found in Homo sapiens (Human).